The primary structure comprises 314 residues: 2,3-dihydroxyphenylpropionate/2,3-dihydroxicinnamic acid 1,2-dioxygenase 2 (314 aa).

Catalysis depends on His-115, which acts as the Proton donor. The Proton acceptor role is filled by His-179.

This sequence belongs to the LigB/MhpB extradiol dioxygenase family. Homotetramer. Fe(2+) is required as a cofactor.

The enzyme catalyses 3-(2,3-dihydroxyphenyl)propanoate + O2 = (2Z,4E)-2-hydroxy-6-oxonona-2,4-dienedioate + H(+). It carries out the reaction (2E)-3-(2,3-dihydroxyphenyl)prop-2-enoate + O2 = (2Z,4E,7E)-2-hydroxy-6-oxonona-2,4,7-trienedioate + H(+). Its pathway is aromatic compound metabolism; 3-phenylpropanoate degradation. Functionally, catalyzes the non-heme iron(II)-dependent oxidative cleavage of 2,3-dihydroxyphenylpropionic acid and 2,3-dihydroxicinnamic acid into 2-hydroxy-6-ketononadienedioate and 2-hydroxy-6-ketononatrienedioate, respectively. The chain is 2,3-dihydroxyphenylpropionate/2,3-dihydroxicinnamic acid 1,2-dioxygenase 2 (mhpB2) from Pseudomonas putida (Arthrobacter siderocapsulatus).